The following is a 337-amino-acid chain: Holliday junction branch migration complex subunit RuvB (337 aa).

The segment at 1 to 182 (MSEEKSVLRD…FGAVFRLSYY (182 aa)) is large ATPase domain (RuvB-L). ATP is bound by residues L21, R22, G63, K66, T67, T68, 129–131 (EDY), R172, Y182, and R219. T67 is a binding site for Mg(2+). The interval 183 to 253 (KLEEIKQIVR…ITQLALTKLG (71 aa)) is small ATPAse domain (RuvB-S). Residues 256–337 (HKGLDASDYL…VKYYKGLLDN (82 aa)) are head domain (RuvB-H). Positions 311 and 316 each coordinate DNA.

The protein belongs to the RuvB family. In terms of assembly, homohexamer. Forms an RuvA(8)-RuvB(12)-Holliday junction (HJ) complex. HJ DNA is sandwiched between 2 RuvA tetramers; dsDNA enters through RuvA and exits via RuvB. An RuvB hexamer assembles on each DNA strand where it exits the tetramer. Each RuvB hexamer is contacted by two RuvA subunits (via domain III) on 2 adjacent RuvB subunits; this complex drives branch migration. In the full resolvosome a probable DNA-RuvA(4)-RuvB(12)-RuvC(2) complex forms which resolves the HJ.

The protein localises to the cytoplasm. The catalysed reaction is ATP + H2O = ADP + phosphate + H(+). In terms of biological role, the RuvA-RuvB-RuvC complex processes Holliday junction (HJ) DNA during genetic recombination and DNA repair, while the RuvA-RuvB complex plays an important role in the rescue of blocked DNA replication forks via replication fork reversal (RFR). RuvA specifically binds to HJ cruciform DNA, conferring on it an open structure. The RuvB hexamer acts as an ATP-dependent pump, pulling dsDNA into and through the RuvAB complex. RuvB forms 2 homohexamers on either side of HJ DNA bound by 1 or 2 RuvA tetramers; 4 subunits per hexamer contact DNA at a time. Coordinated motions by a converter formed by DNA-disengaged RuvB subunits stimulates ATP hydrolysis and nucleotide exchange. Immobilization of the converter enables RuvB to convert the ATP-contained energy into a lever motion, pulling 2 nucleotides of DNA out of the RuvA tetramer per ATP hydrolyzed, thus driving DNA branch migration. The RuvB motors rotate together with the DNA substrate, which together with the progressing nucleotide cycle form the mechanistic basis for DNA recombination by continuous HJ branch migration. Branch migration allows RuvC to scan DNA until it finds its consensus sequence, where it cleaves and resolves cruciform DNA. The protein is Holliday junction branch migration complex subunit RuvB of Acholeplasma laidlawii (strain PG-8A).